The following is a 530-amino-acid chain: MATATIALGTDSIKMENGQGTAAKLGLPPLTPEQQEALQKAKKYAMEQSIKSVLVKQTIAHQQQQLTNLQMAAVTMGFGDPLSPLQSMAAQRQRALAIMCRVYVGSIYYELGEDTIRQAFAPFGPIKSIDMSWDSVTMKHKGFAFVEYEVPEAAQLALEQMNSVMLGGRNIKVGRPSNIGQAQPIIDQLAEEARAFNRIYVASVHQDLSDDDIKSVFEAFGKIKSCTLARDPTTGKHKGYGFIEYEKAQSSQDAVSSMNLFDLGGQYLRVGKAVTPPMPLLTPATPGGLPPAAAVAAAAATAKITAQEAVAGAAVLGTLATPGLVSPALTLAQPLGALPQAVMAAQAPGVITGVTPARPPIPVTIPSVGVVNPILASPPTLGLLEPKKEKEEEELFPESERPEMLSEQEHMSISGSSARHMVMQKLLRKQESTVMVLRNMVDPKDIDDDLEGEVTEECGKFGAVNRVIIYQEKQGEEEDAEIIVKIFVEFSVASETHKAIQDLNGRWFAGRKVVAEVYDQERFDNSDLSA.

The inhibits homodimerization stretch occupies residues 1-487 (MATATIALGT…EDAEIIVKIF (487 aa)). Lys-14 is covalently cross-linked (Glycyl lysine isopeptide (Lys-Gly) (interchain with G-Cter in SUMO2)). The residue at position 31 (Thr-31) is a Phosphothreonine. The tract at residues 48–530 (QSIKSVLVKQ…ERFDNSDLSA (483 aa)) is inhibits transcriptional repression, interaction with ERCC3 and apoptosis induction. Lys-51 participates in a covalent cross-link: Glycyl lysine isopeptide (Lys-Gly) (interchain with G-Cter in SUMO2). The residue at position 83 (Ser-83) is a Phosphoserine. RRM domains follow at residues 100–178 (CRVY…RPSN) and 197–275 (NRIY…KAVT). Ser-215 carries the phosphoserine modification. N6-acetyllysine is present on Lys-222. Thr-285 is subject to Phosphothreonine. The disordered stretch occupies residues 387–408 (KKEKEEEELFPESERPEMLSEQ). A Glycyl lysine isopeptide (Lys-Gly) (interchain with G-Cter in SUMO2) cross-link involves residue Lys-390. The span at 398–408 (ESERPEMLSEQ) shows a compositional bias: basic and acidic residues. Lys-425 bears the N6-acetyllysine mark. A Glycyl lysine isopeptide (Lys-Gly) (interchain with G-Cter in SUMO2) cross-link involves residue Lys-429. The 88-residue stretch at 433–520 (TVMVLRNMVD…RKVVAEVYDQ (88 aa)) folds into the RRM 3; atypical domain.

The protein belongs to the RRM half pint family. In terms of assembly, homodimer. Associates with the spliceosome. Found in a complex with RO60 and Y5 RNA. Found in a complex with FUBP1 and far upstream element (FUSE) DNA segment. Interacts directly with ERCC3. Interacts with CDK7 and GTF2H1. Interacts with SRSF11/P54. Interacts with ARGLU1; interaction may be involved in ARGLU1-mediated modulation of alternative splicing.

It is found in the nucleus. In terms of biological role, DNA- and RNA-binding protein, involved in several nuclear processes such as pre-mRNA splicing, apoptosis and transcription regulation. In association with FUBP1 regulates MYC transcription at the P2 promoter through the core-TFIIH basal transcription factor. Acts as a transcriptional repressor through the core-TFIIH basal transcription factor. Represses FUBP1-induced transcriptional activation but not basal transcription. Decreases ERCC3 helicase activity. Is also involved in pre-mRNA splicing. Promotes splicing of an intron with weak 3'-splice site and pyrimidine tract in a cooperative manner with U2AF2. Involved in apoptosis induction when overexpressed in HeLa cells. Modulates alternative splicing of several mRNAs. Binds to relaxed DNA of active promoter regions. Binds to the pyrimidine tract and 3'-splice site regions of pre-mRNA; binding is enhanced in presence of U2AF2. Binds to Y5 RNA in association with RO60. Binds to poly(U) RNA. In Bos taurus (Bovine), this protein is Poly(U)-binding-splicing factor PUF60.